Reading from the N-terminus, the 295-residue chain is Phosphatidylserine decarboxylase proenzyme (295 aa).

Catalysis depends on charge relay system; for autoendoproteolytic cleavage activity residues D90, H147, and S254. Residue S254 is the Schiff-base intermediate with substrate; via pyruvic acid; for decarboxylase activity of the active site. The residue at position 254 (S254) is a Pyruvic acid (Ser); by autocatalysis.

Belongs to the phosphatidylserine decarboxylase family. PSD-B subfamily. Prokaryotic type I sub-subfamily. In terms of assembly, heterodimer of a large membrane-associated beta subunit and a small pyruvoyl-containing alpha subunit. Pyruvate is required as a cofactor. In terms of processing, is synthesized initially as an inactive proenzyme. Formation of the active enzyme involves a self-maturation process in which the active site pyruvoyl group is generated from an internal serine residue via an autocatalytic post-translational modification. Two non-identical subunits are generated from the proenzyme in this reaction, and the pyruvate is formed at the N-terminus of the alpha chain, which is derived from the carboxyl end of the proenzyme. The autoendoproteolytic cleavage occurs by a canonical serine protease mechanism, in which the side chain hydroxyl group of the serine supplies its oxygen atom to form the C-terminus of the beta chain, while the remainder of the serine residue undergoes an oxidative deamination to produce ammonia and the pyruvoyl prosthetic group on the alpha chain. During this reaction, the Ser that is part of the protease active site of the proenzyme becomes the pyruvoyl prosthetic group, which constitutes an essential element of the active site of the mature decarboxylase.

It localises to the cell membrane. The enzyme catalyses a 1,2-diacyl-sn-glycero-3-phospho-L-serine + H(+) = a 1,2-diacyl-sn-glycero-3-phosphoethanolamine + CO2. It participates in phospholipid metabolism; phosphatidylethanolamine biosynthesis; phosphatidylethanolamine from CDP-diacylglycerol: step 2/2. Catalyzes the formation of phosphatidylethanolamine (PtdEtn) from phosphatidylserine (PtdSer). The chain is Phosphatidylserine decarboxylase proenzyme from Sodalis glossinidius (strain morsitans).